The sequence spans 291 residues: MVREQYTTITEGTHIERPENQAVYKIGIYGWRKRCLYLFVLLLLIVLLVNFALTIWILRVMWFSPVGMGHLHVTADGLHLEGESEFLFPLYVKEIRSRVDSSLLLQSTQNVTMNARNTEGEVTGRLKVGPQMVEVQSQQFQIHSKDGKPLFTVDEEKVMVGTDKLRVTGPEGALFEHSVETPLVRPDPPQDLRLESPTRSLSMDAPKGIHIQAPAGKIEALTQMDIVLQSSDGTVVLDAETVCLPELALGSQGPAGSSQGLYEVCVCPDGKLYLSVAGMGTTCHEHSHLCL.

The chain crosses the membrane as a helical; Signal-anchor for type II membrane protein span at residues Leu-38–Leu-58. Topologically, residues Arg-59 to Leu-291 are extracellular. Asn-110 carries an N-linked (GlcNAc...) asparagine glycan. Cystine bridges form between Cys-265/Cys-290 and Cys-267/Cys-283.

This sequence belongs to the sarcoglycan beta/delta/gamma/zeta family. In terms of assembly, interacts with the syntrophin SNTA1. Cross-link to form 2 major subcomplexes: one consisting of SGCB, SGCD and SGCG and the other consisting of SGCB and SGCD. The association between SGCB and SGCG is particularly strong while SGCA is loosely associated with the other sarcoglycans. Interacts with FLNC. Post-translationally, disulfide bonds are present.

It localises to the cell membrane. Its subcellular location is the sarcolemma. The protein localises to the cytoplasm. It is found in the cytoskeleton. Functionally, component of the sarcoglycan complex, a subcomplex of the dystrophin-glycoprotein complex which forms a link between the F-actin cytoskeleton and the extracellular matrix. The sequence is that of Gamma-sarcoglycan (SGCG) from Bos taurus (Bovine).